Here is a 459-residue protein sequence, read N- to C-terminus: MHNIHRRHFLKAAGAVTAGLITANITASTHANSVAPKPQNGKSVIGLIAPKMDVVRVGFIGVGERGFSHVEQFCHLEGVELKAICDTHQTVIDRAVAHIVKQNRPQPTVYTGDDLSYRDLLSRDDIDIVIISTPWEWHAPMAIETMESGKHAFVEVPLALTVEECWQIVDTAERTQKNCMMMENVNYGREELMVLNMVRQGVFGELLHGEAAYIHELRWQMKEIDHKTGSWRTYWHTKRNGNLYPTHGLGPVSQYMNINRGDRFDYLTSMSSPALGRALYAKREFPADHERNQLKYINGDINTSLIKTVKGRTIMVQHDTTTPRPYSRHNLLQGTNGVFAGFPNRIAVEHGGFGKSYHEWDMDMQKWYDKYDHPLWQRIGKEAEINGGHGGMDFVMLWRMVYCLRNGEALDQDVYDAASWSVVNILSEQSVNNRSNSVTFPDFTRGAWEHAKPLGIVGA.

Residues 1-31 constitute a signal peptide (tat-type signal); that stretch reads MHNIHRRHFLKAAGAVTAGLITANITASTHA. NAD(+) is bound by residues 64–65, D86, 135–138, 155–156, and N184; these read ER, WEWH, and EV. Substrate is bound by residues Y213, R232, 244-247, and Y326; that span reads YPTH. Y244 is an NAD(+) binding site.

Belongs to the Gfo/Idh/MocA family. Glycosyl hydrolase 109 subfamily. NAD(+) is required as a cofactor. Predicted to be exported by the Tat system. The position of the signal peptide cleavage has not been experimentally proven.

Glycosidase. In Shewanella putrefaciens (strain CN-32 / ATCC BAA-453), this protein is Glycosyl hydrolase family 109 protein.